Consider the following 538-residue polypeptide: Cytochrome P450 monooxygenase cfoH (538 aa).

Residues 24–44 (VLTFFAILLVAILLWYMIPYF) form a helical membrane-spanning segment. C471 serves as a coordination point for heme.

This sequence belongs to the cytochrome P450 family. Requires heme as cofactor.

Its subcellular location is the membrane. It functions in the pathway secondary metabolite biosynthesis; flavonoid biosynthesis. Its function is as follows. Cytochrome P450 monooxygenase; part of the gene cluster that mediates the biosynthesis of chlorflavonin, a fungal flavonoid with acetolactate synthase inhibitory activity. Within the pathway, cfoH is responsible for the hydroxylation of the flavonoid skeleton at position C2'. The pathway begins with the PKS-NRPS hybrid synthetase cfoA that uses benzoic acid or p-hydroxybenzoic acid as a starter unit with four rounds of chain elongation using malonyl-CoA to form the chalcone skeleton. Then, a new type of chalcone isomerase, cfoK, catalyzes the conversion of the chalcone into a flavanone by a histidine-mediated oxa-Michael addition mechanism. The desaturation of flavanone to flavone is catalyzed by a new type of flavone synthase, the flavin mononucleotide (FMN)-dependent oxidoreductase cfoJ. Monooxygenases cfoF, cfoG, and P450 cfoH are responsible for the hydroxylation of the flavonoid skeleton at sites C3, C8, and C2', respectively. Like cfoF, the dehydratase cfoI plays also a role in the hydroxylation of position C3. Methyltransferases cfoB, cfoC, and cfoD then catalyze the methylation of C7-OH, C8-OH, and C3-OH, respectively. Finally, the monooxygenase cfoE is responsible for the chlorination of flavonoid at position C3'. This Aspergillus candidus protein is Cytochrome P450 monooxygenase cfoH.